We begin with the raw amino-acid sequence, 534 residues long: NAD(P)H-quinone oxidoreductase subunit 2 (534 aa).

14 helical membrane-spanning segments follow: residues 15-35, 42-62, 79-99, 109-129, 132-152, 167-187, 210-230, 244-264, 280-300, 306-326, 334-354, 378-398, 410-432, and 466-486; these read ILPE…DLIL, WIGY…YFQW, LSIV…LMSI, LAEF…LSGA, LVMI…LTGY, LLIG…LYGL, LGLV…ISAA, PTPV…ALAI, FVFT…ALAQ, MLAY…IAGT, IFYL…IILF, LGLS…GFFG, GLYW…YIRV, and VGLV…NPLF.

This sequence belongs to the complex I subunit 2 family. In terms of assembly, NDH-1 can be composed of about 15 different subunits; different subcomplexes with different compositions have been identified which probably have different functions.

It localises to the cellular thylakoid membrane. The enzyme catalyses a plastoquinone + NADH + (n+1) H(+)(in) = a plastoquinol + NAD(+) + n H(+)(out). The catalysed reaction is a plastoquinone + NADPH + (n+1) H(+)(in) = a plastoquinol + NADP(+) + n H(+)(out). In terms of biological role, NDH-1 shuttles electrons from an unknown electron donor, via FMN and iron-sulfur (Fe-S) centers, to quinones in the respiratory and/or the photosynthetic chain. The immediate electron acceptor for the enzyme in this species is believed to be plastoquinone. Couples the redox reaction to proton translocation, and thus conserves the redox energy in a proton gradient. Cyanobacterial NDH-1 also plays a role in inorganic carbon-concentration. The polypeptide is NAD(P)H-quinone oxidoreductase subunit 2 (Nostoc punctiforme (strain ATCC 29133 / PCC 73102)).